The sequence spans 103 residues: Pyrimidine/purine nucleoside phosphorylase (103 aa).

This sequence belongs to the nucleoside phosphorylase PpnP family.

The enzyme catalyses a purine D-ribonucleoside + phosphate = a purine nucleobase + alpha-D-ribose 1-phosphate. The catalysed reaction is adenosine + phosphate = alpha-D-ribose 1-phosphate + adenine. It catalyses the reaction cytidine + phosphate = cytosine + alpha-D-ribose 1-phosphate. It carries out the reaction guanosine + phosphate = alpha-D-ribose 1-phosphate + guanine. The enzyme catalyses inosine + phosphate = alpha-D-ribose 1-phosphate + hypoxanthine. The catalysed reaction is thymidine + phosphate = 2-deoxy-alpha-D-ribose 1-phosphate + thymine. It catalyses the reaction uridine + phosphate = alpha-D-ribose 1-phosphate + uracil. It carries out the reaction xanthosine + phosphate = alpha-D-ribose 1-phosphate + xanthine. Catalyzes the phosphorolysis of diverse nucleosides, yielding D-ribose 1-phosphate and the respective free bases. Can use uridine, adenosine, guanosine, cytidine, thymidine, inosine and xanthosine as substrates. Also catalyzes the reverse reactions. This is Pyrimidine/purine nucleoside phosphorylase from Shewanella baltica (strain OS155 / ATCC BAA-1091).